The primary structure comprises 276 residues: Dermonecrotic toxin LsaSicTox-alphaIB2iii (276 aa).

The active site involves histidine 5. Mg(2+)-binding residues include glutamate 25 and aspartate 27. Catalysis depends on histidine 41, which acts as the Nucleophile. 2 cysteine pairs are disulfide-bonded: cysteine 45–cysteine 51 and cysteine 47–cysteine 190. Aspartate 85 contacts Mg(2+). Asparagine 129 and asparagine 253 each carry an N-linked (GlcNAc...) asparagine glycan.

This sequence belongs to the arthropod phospholipase D family. Class II subfamily. The cofactor is Mg(2+). In terms of tissue distribution, expressed by the venom gland.

The protein localises to the secreted. The catalysed reaction is an N-(acyl)-sphingosylphosphocholine = an N-(acyl)-sphingosyl-1,3-cyclic phosphate + choline. It carries out the reaction an N-(acyl)-sphingosylphosphoethanolamine = an N-(acyl)-sphingosyl-1,3-cyclic phosphate + ethanolamine. It catalyses the reaction a 1-acyl-sn-glycero-3-phosphocholine = a 1-acyl-sn-glycero-2,3-cyclic phosphate + choline. The enzyme catalyses a 1-acyl-sn-glycero-3-phosphoethanolamine = a 1-acyl-sn-glycero-2,3-cyclic phosphate + ethanolamine. Its function is as follows. Dermonecrotic toxins cleave the phosphodiester linkage between the phosphate and headgroup of certain phospholipids (sphingolipid and lysolipid substrates), forming an alcohol (often choline) and a cyclic phosphate. This toxin acts on sphingomyelin (SM). It may also act on ceramide phosphoethanolamine (CPE), lysophosphatidylcholine (LPC) and lysophosphatidylethanolamine (LPE), but not on lysophosphatidylserine (LPS), and lysophosphatidylglycerol (LPG). It acts by transphosphatidylation, releasing exclusively cyclic phosphate products as second products. Induces dermonecrosis, hemolysis, increased vascular permeability, edema, inflammatory response, and platelet aggregation. This Loxosceles sabina (Tucson recluse spider) protein is Dermonecrotic toxin LsaSicTox-alphaIB2iii.